The primary structure comprises 719 residues: Serine/threonine-protein kinase PAK 5 (719 aa).

5 disordered regions span residues 1–28 (MFGK…FDPQ), 96–118 (RSNS…RIQG), 226–245 (SPLD…TSRC), 253–298 (SESD…PMMP), and 339–372 (VFSP…GSHQ). Residues 11–24 (ISGPSNFEHRVHTG) enclose the CRIB domain. The tract at residues 25-448 (FDPQEQKFTG…VVSPGDPREY (424 aa)) is linker. Ser104 bears the Phosphoserine mark. At Thr107 the chain carries Phosphothreonine. Polar residues predominate over residues 226–244 (SPLDYSFQLTPSRTAGTSR). The span at 357–372 (LPQSQSKAGYSSGSHQ) shows a compositional bias: polar residues. The Protein kinase domain occupies 449–700 (LDNFIKIGEG…AQELLGHPFL (252 aa)). Residues 455 to 463 (IGEGSTGIV) and Lys478 contribute to the ATP site. Asp568 (proton acceptor) is an active-site residue.

The protein belongs to the protein kinase superfamily. STE Ser/Thr protein kinase family. STE20 subfamily. In terms of assembly, interacts tightly with GTP-bound but not GDP-bound CDC42/p21 and RAC1. Interacts with MARK2, leading to inhibit MARK2 independently of kinase activity. Interacts with RHOD and RHOH. Autophosphorylated when activated by CDC42/p21. Highly expressed in brain and eye. Also expressed in adrenal gland, pancreas, prostate and testes. Within the brain, expression is restricted to neurons. Present in brain but not in kidney, lung and spleen (at protein level).

Its subcellular location is the mitochondrion. The protein resides in the cytoplasm. It is found in the nucleus. It carries out the reaction L-seryl-[protein] + ATP = O-phospho-L-seryl-[protein] + ADP + H(+). The enzyme catalyses L-threonyl-[protein] + ATP = O-phospho-L-threonyl-[protein] + ADP + H(+). In terms of biological role, serine/threonine protein kinase that plays a role in a variety of different signaling pathways including cytoskeleton regulation, cell migration, proliferation or cell survival. Activation by various effectors including growth factor receptors or active CDC42 and RAC1 results in a conformational change and a subsequent autophosphorylation on several serine and/or threonine residues. Phosphorylates the proto-oncogene RAF1 and stimulates its kinase activity. Promotes cell survival by phosphorylating the BCL2 antagonist of cell death BAD. Phosphorylates CTNND1, probably to regulate cytoskeletal organization and cell morphology. Keeps microtubules stable through MARK2 inhibition and destabilizes the F-actin network leading to the disappearance of stress fibers and focal adhesions. The polypeptide is Serine/threonine-protein kinase PAK 5 (Mus musculus (Mouse)).